The primary structure comprises 549 residues: Glucose-6-phosphate isomerase (549 aa).

Residue Glu-355 is the Proton donor of the active site. Residues His-386 and Lys-514 contribute to the active site.

Belongs to the GPI family.

It is found in the cytoplasm. The enzyme catalyses alpha-D-glucose 6-phosphate = beta-D-fructose 6-phosphate. It participates in carbohydrate biosynthesis; gluconeogenesis. Its pathway is carbohydrate degradation; glycolysis; D-glyceraldehyde 3-phosphate and glycerone phosphate from D-glucose: step 2/4. In terms of biological role, catalyzes the reversible isomerization of glucose-6-phosphate to fructose-6-phosphate. This is Glucose-6-phosphate isomerase from Pectobacterium carotovorum subsp. carotovorum (strain PC1).